We begin with the raw amino-acid sequence, 352 residues long: MDYQVSSPTYDIDYYTSEPCQKINVKQIAARLLPPLYSLVFIFGFVGNILVVLILINCKRLKSMTDIYLLNLAISDLLFLLTVPFWAHYAAAQWDFGNTMCQLLTGLYFIGFFSGIFFIILLTIDRYLAIVHAVFALKARTVTFGVVTSVITWVVAVFASLPRIIFTRSQREGLHYTCSSHFPYSQYQFWKNFQTLKIVILGLVLPLLVMVICYSGILKTLLRCRNEKKRHRAVRLIFTIMIVYFLFWAPYNIVLLLNTFQEFFGLNNCSSSNRLDQAMQVTETLGMTHCCINPIIYAFVGEKFRNYLLVFFQKHIAKRFCKCCSIFQQEAPERASSVYTRSTGEQETSVGL.

The Extracellular segment spans residues 1–30; that stretch reads MDYQVSSPTYDIDYYTSEPCQKINVKQIAA. A Sulfotyrosine modification is found at Tyr3. O-linked (GalNAc...) serine glycans are attached at residues Ser6 and Ser7. A sulfotyrosine mark is found at Tyr10, Tyr14, and Tyr15. 2 disulfides stabilise this stretch: Cys20/Cys269 and Cys101/Cys178. A helical membrane pass occupies residues 31–58; the sequence is RLLPPLYSLVFIFGFVGNILVVLILINC. The Cytoplasmic portion of the chain corresponds to 59 to 68; sequence KRLKSMTDIY. The helical transmembrane segment at 69-89 threads the bilayer; the sequence is LLNLAISDLLFLLTVPFWAHY. The Extracellular portion of the chain corresponds to 90–102; sequence AAAQWDFGNTMCQ. A helical membrane pass occupies residues 103 to 124; that stretch reads LLTGLYFIGFFSGIFFIILLTI. The Cytoplasmic segment spans residues 125-141; the sequence is DRYLAIVHAVFALKART. The chain crosses the membrane as a helical span at residues 142-166; that stretch reads VTFGVVTSVITWVVAVFASLPRIIF. At 167 to 198 the chain is on the extracellular side; that stretch reads TRSQREGLHYTCSSHFPYSQYQFWKNFQTLKI. The chain crosses the membrane as a helical span at residues 199–218; the sequence is VILGLVLPLLVMVICYSGIL. Topologically, residues 219-235 are cytoplasmic; sequence KTLLRCRNEKKRHRAVR. Residues 236 to 260 form a helical membrane-spanning segment; the sequence is LIFTIMIVYFLFWAPYNIVLLLNTF. The Extracellular portion of the chain corresponds to 261–277; sequence QEFFGLNNCSSSNRLDQ. The helical transmembrane segment at 278 to 301 threads the bilayer; that stretch reads AMQVTETLGMTHCCINPIIYAFVG. The Cytoplasmic segment spans residues 302–352; it reads EKFRNYLLVFFQKHIAKRFCKCCSIFQQEAPERASSVYTRSTGEQETSVGL. Residues Cys321, Cys323, and Cys324 are each lipidated (S-palmitoyl cysteine). A phosphoserine; by BARK1 mark is found at Ser336, Ser337, Ser342, and Ser349.

This sequence belongs to the G-protein coupled receptor 1 family. In terms of assembly, interacts with PRAF2. Efficient ligand binding to CCL3/MIP-1alpha and CCL4/MIP-1beta requires sulfation, O-glycosylation and sialic acid modifications. Glycosylation on Ser-6 is required for efficient binding of CCL4. Interacts with GRK2. Interacts with ARRB1 and ARRB2. Interacts with CNIH4. Interacts with S100A4; this interaction stimulates T-lymphocyte chemotaxis. In terms of processing, sulfated on at least 2 of the N-terminal tyrosines. Sulfation is required for efficient binding of the chemokines, CCL3 and CCL4. Post-translationally, palmitoylation in the C-terminal is important for cell surface expression. Phosphorylation on serine residues in the C-terminal is stimulated by binding CC chemokines especially by APO-RANTES. In terms of processing, O-glycosylated, but not N-glycosylated. Ser-6 appears to be the major site even if Ser-7 may be also O-glycosylated. Also sialylated glycans present which contribute to chemokine binding. Thr-16 and Ser-17 may also be glycosylated and, if so, with small moieties such as a T-antigen.

Its subcellular location is the cell membrane. In terms of biological role, receptor for a number of inflammatory CC-chemokines including CCL3/MIP-1-alpha, CCL4/MIP-1-beta and RANTES and subsequently transduces a signal by increasing the intracellular calcium ion level. May play a role in the control of granulocytic lineage proliferation or differentiation. Participates in T-lymphocyte migration to the infection site by acting as a chemotactic receptor. The chain is C-C chemokine receptor type 5 (CCR5) from Chlorocebus tantalus (Tantalus monkey).